The chain runs to 476 residues: Phosphomethylpyrimidine synthase (476 aa).

Residues 1 to 27 (MSTQLQHARDGTVTDAMRRVADREGRD) are disordered. The segment covering 7–27 (HARDGTVTDAMRRVADREGRD) has biased composition (basic and acidic residues). Substrate contacts are provided by residues N67, M96, Y125, H160, 180–182 (SRG), 221–224 (DGLR), and E260. H264 provides a ligand contact to Zn(2+). A substrate-binding site is contributed by Y287. Residue H328 coordinates Zn(2+). C408, C411, and C416 together coordinate [4Fe-4S] cluster. Residues 425–476 (RDAGDDADDMTELTTETDLSESAAAEVNRPPTGTHDAPAAEQAPSPGDDDDD) are disordered. Low complexity predominate over residues 436–447 (ELTTETDLSESA).

The protein belongs to the ThiC family. The cofactor is [4Fe-4S] cluster.

It catalyses the reaction 5-amino-1-(5-phospho-beta-D-ribosyl)imidazole + S-adenosyl-L-methionine = 4-amino-2-methyl-5-(phosphooxymethyl)pyrimidine + CO + 5'-deoxyadenosine + formate + L-methionine + 3 H(+). It participates in cofactor biosynthesis; thiamine diphosphate biosynthesis. Functionally, catalyzes the synthesis of the hydroxymethylpyrimidine phosphate (HMP-P) moiety of thiamine from aminoimidazole ribotide (AIR) in a radical S-adenosyl-L-methionine (SAM)-dependent reaction. The chain is Phosphomethylpyrimidine synthase from Halobacterium salinarum (strain ATCC 29341 / DSM 671 / R1).